The following is a 60-amino-acid chain: Large ribosomal subunit protein bL33 (60 aa).

Belongs to the bacterial ribosomal protein bL33 family.

The polypeptide is Large ribosomal subunit protein bL33 (Chlorobium luteolum (strain DSM 273 / BCRC 81028 / 2530) (Pelodictyon luteolum)).